Here is a 624-residue protein sequence, read N- to C-terminus: Chaperone protein DnaK (624 aa).

Threonine 174 bears the Phosphothreonine; by autocatalysis mark. Disordered stretches follow at residues 470 to 504 and 577 to 624; these read ITIK…KEEV and NGGA…DPDK. Over residues 481-504 the composition is skewed to basic and acidic residues; sequence EEIKKMQKDAEEHAEEDKKRKEEV. Positions 577–605 are enriched in low complexity; the sequence is NGGAQGAAGQAGPQGPQNGGQPNNDNGSD. The span at 615 to 624 shows a compositional bias: basic and acidic residues; it reads GDFHKVDPDK.

This sequence belongs to the heat shock protein 70 family.

Functionally, acts as a chaperone. The chain is Chaperone protein DnaK from Lactobacillus johnsonii (strain CNCM I-12250 / La1 / NCC 533).